A 182-amino-acid chain; its full sequence is Dual-action ribosomal maturation protein DarP (182 aa).

The protein belongs to the DarP family.

The protein resides in the cytoplasm. Its function is as follows. Member of a network of 50S ribosomal subunit biogenesis factors which assembles along the 30S-50S interface, preventing incorrect 23S rRNA structures from forming. Promotes peptidyl transferase center (PTC) maturation. This chain is Dual-action ribosomal maturation protein DarP, found in Yersinia pestis.